Consider the following 361-residue polypeptide: 3-dehydroquinate synthase (361 aa).

NAD(+) contacts are provided by residues 72–77, 130–131, lysine 142, and lysine 151; these read SGEKEK and TT. Glutamate 184, histidine 247, and histidine 264 together coordinate Zn(2+).

The protein belongs to the sugar phosphate cyclases superfamily. Dehydroquinate synthase family. Co(2+) is required as a cofactor. The cofactor is Zn(2+). It depends on NAD(+) as a cofactor.

It localises to the cytoplasm. It catalyses the reaction 7-phospho-2-dehydro-3-deoxy-D-arabino-heptonate = 3-dehydroquinate + phosphate. The protein operates within metabolic intermediate biosynthesis; chorismate biosynthesis; chorismate from D-erythrose 4-phosphate and phosphoenolpyruvate: step 2/7. In terms of biological role, catalyzes the conversion of 3-deoxy-D-arabino-heptulosonate 7-phosphate (DAHP) to dehydroquinate (DHQ). The polypeptide is 3-dehydroquinate synthase (Bacillus mycoides (strain KBAB4) (Bacillus weihenstephanensis)).